The primary structure comprises 119 residues: Ribonuclease P protein component (119 aa).

The protein belongs to the RnpA family. In terms of assembly, consists of a catalytic RNA component (M1 or rnpB) and a protein subunit.

The catalysed reaction is Endonucleolytic cleavage of RNA, removing 5'-extranucleotides from tRNA precursor.. Functionally, RNaseP catalyzes the removal of the 5'-leader sequence from pre-tRNA to produce the mature 5'-terminus. It can also cleave other RNA substrates such as 4.5S RNA. The protein component plays an auxiliary but essential role in vivo by binding to the 5'-leader sequence and broadening the substrate specificity of the ribozyme. This chain is Ribonuclease P protein component, found in Mycolicibacterium paratuberculosis (strain ATCC BAA-968 / K-10) (Mycobacterium paratuberculosis).